The primary structure comprises 153 residues: UPF0756 membrane protein BA_4840/GBAA_4840/BAS4489 (153 aa).

Helical transmembrane passes span 8 to 28, 54 to 74, 87 to 107, and 117 to 137; these read FLFI…TVAI, LGVT…EIGF, WIAL…VQLL, and LVFG…GPLI.

Belongs to the UPF0756 family.

It is found in the cell membrane. The chain is UPF0756 membrane protein BA_4840/GBAA_4840/BAS4489 from Bacillus anthracis.